A 276-amino-acid polypeptide reads, in one-letter code: Large ribosomal subunit protein uL2 (276 aa).

Residues 226-276 (MNSVDHPHGGGEGKTSGGRHPVSPWGTPTKGYKTRSNKRTDKLILRHRNKG) form a disordered region.

It belongs to the universal ribosomal protein uL2 family. Part of the 50S ribosomal subunit. Forms a bridge to the 30S subunit in the 70S ribosome.

Its function is as follows. One of the primary rRNA binding proteins. Required for association of the 30S and 50S subunits to form the 70S ribosome, for tRNA binding and peptide bond formation. It has been suggested to have peptidyltransferase activity; this is somewhat controversial. Makes several contacts with the 16S rRNA in the 70S ribosome. This chain is Large ribosomal subunit protein uL2, found in Vesicomyosocius okutanii subsp. Calyptogena okutanii (strain HA).